A 106-amino-acid polypeptide reads, in one-letter code: UPF0145 protein Athe_0545 (106 aa).

The protein belongs to the UPF0145 family.

The chain is UPF0145 protein Athe_0545 from Caldicellulosiruptor bescii (strain ATCC BAA-1888 / DSM 6725 / KCTC 15123 / Z-1320) (Anaerocellum thermophilum).